We begin with the raw amino-acid sequence, 478 residues long: Glutamine synthetase (478 aa).

A GS beta-grasp domain is found at 16–100 (EKVEYVDVRF…INFFVHDPFT (85 aa)). Positions 108–478 (PRNIARKAEN…PYEFALYYDV (371 aa)) constitute a GS catalytic domain. Mg(2+)-binding residues include E133 and E135. E214 lines the ATP pocket. Residues E219 and E227 each coordinate Mg(2+). 230 to 232 (YQF) lines the ATP pocket. L-glutamate contacts are provided by residues 271–272 (NG) and G272. H276 is a Mg(2+) binding site. ATP-binding positions include 278 to 280 (HQS) and S280. Positions 329, 335, and 347 each coordinate L-glutamate. R347, R352, and K361 together coordinate ATP. Residue E366 coordinates Mg(2+). R368 is a binding site for L-glutamate. Residue Y406 is modified to O-AMP-tyrosine.

It belongs to the glutamine synthetase family. In terms of assembly, oligomer of 12 subunits arranged in the form of two hexagons. Mg(2+) is required as a cofactor.

The protein localises to the cytoplasm. The catalysed reaction is L-glutamate + NH4(+) + ATP = L-glutamine + ADP + phosphate + H(+). With respect to regulation, when cellular nitrogen levels are high, the C-terminal adenylyl transferase (AT) of GlnE inhibits GlnA by covalent transfer of an adenylyl group from ATP to Tyr-406. Conversely, when nitrogen levels are low, the N-terminal adenylyl removase (AR) of GlnE activates GlnA by removing the adenylyl group by phosphorolysis. The fully adenylated enzyme complex is inactive. Involved in nitrogen metabolism via ammonium assimilation. Catalyzes the ATP-dependent biosynthesis of glutamine from glutamate and ammonia. Also plays a key role in controlling the ammonia levels within infected host cells and so contributes to the pathogens capacity to inhibit phagosome acidification and phagosome-lysosome fusion. Involved in cell wall biosynthesis via the production of the major component poly-L-glutamine (PLG). PLG synthesis in the cell wall occurs only in nitrogen limiting conditions and on the contrary high nitrogen conditions inhibit PLG synthesis. This is Glutamine synthetase from Mycobacterium bovis (strain ATCC BAA-935 / AF2122/97).